The chain runs to 583 residues: MATSTPSRAREHASAAQSPGSPTRISRMQEKEDLRHLNDRLAAYIERVRSLEADKSLLKIQLEEREEVSSREVTNLRQLYETELADARKLLDQTANERARLQVELGKVREEYRQLQARNSKKENDLSLAQNQLRDLESKLNTKEAELATALSGKRGLEEQLQEQRAQIAGLESSLRDTTKQLHDEMLWRVDLENKMQTIREQLDFQKNIHTQEVKEIKKRHDTRIVEIDSGRRVEFESKLAEALQELRRDHEQQILEYKEHLEKNFSAKLENAQLAAAKNSDYASATREEIMATKLRVDTLSSQLNHYQKQNSALEAKVRDLQDMLDRAHDMHRRQMTEKDREVTEIRQTLQGQLEEYEQLLDVKLALDMEINAYRKMLEGEEQRLKLSPSPSQRSTVSRASTSQTSRLLRGKKRKLDETGRSVTKRSYKVVQQASSTGPVSVEDIDPEGNYVRLLNNTEEDFSLHGWVVKRMHMSLPEIAFKLPCRFILKSSQRVTIWAAGAGAVHSPPTDLVWKSQKTWGTGDNIKITLLDSTGEECAERTLYRVIGEEGETDEDFVEEEELERQFRSQSHQSVDPSCSIM.

The disordered stretch occupies residues 1–30; that stretch reads MATSTPSRAREHASAAQSPGSPTRISRMQE. Residues 2-32 are head; the sequence is ATSTPSRAREHASAAQSPGSPTRISRMQEKE. The span at 15–26 shows a compositional bias: polar residues; the sequence is AAQSPGSPTRIS. The residue at position 21 (Ser-21) is a Phosphoserine. The 357-residue stretch at 30-386 folds into the IF rod domain; sequence EKEDLRHLND…KMLEGEEQRL (357 aa). The tract at residues 33–67 is coil 1A; it reads DLRHLNDRLAAYIERVRSLEADKSLLKIQLEEREE. The linker 1 stretch occupies residues 68–79; it reads VSSREVTNLRQL. Positions 80–215 are coil 1B; that stretch reads YETELADARK…QKNIHTQEVK (136 aa). A linker 2 region spans residues 216 to 242; that stretch reads EIKKRHDTRIVEIDSGRRVEFESKLAE. A coil 2 region spans residues 243-384; sequence ALQELRRDHE…YRKMLEGEEQ (142 aa). Residues 383 to 431 are disordered; sequence EQRLKLSPSPSQRSTVSRASTSQTSRLLRGKKRKLDETGRSVTKRSYKV. The segment at 385–580 is tail; the sequence is RLKLSPSPSQ…QSHQSVDPSC (196 aa). Residues 390–408 show a composition bias toward polar residues; sequence PSPSQRSTVSRASTSQTSR. Phosphoserine is present on Ser-391. The LTD domain occupies 429–546; it reads YKVVQQASST…EECAERTLYR (118 aa). Cys-580 is modified (cysteine methyl ester). The S-farnesyl cysteine moiety is linked to residue Cys-580. A propeptide spans 581–583 (removed in mature form); that stretch reads SIM.

It belongs to the intermediate filament family. Phosphorylation plays a key role in lamin organization, subcellular localization and nuclear envelope disintegration. Phosphorylation by CDK1 at Ser-21 at the onset of mitosis drives lamin disassembly and nuclear envelope breakdown.

The protein localises to the nucleus lamina. It is found in the nucleus envelope. It localises to the nucleus. Its subcellular location is the nucleoplasm. The protein resides in the nucleus matrix. Its function is as follows. Lamins are intermediate filament proteins that assemble into a filamentous meshwork, and which constitute the major components of the nuclear lamina, a fibrous layer on the nucleoplasmic side of the inner nuclear membrane. Lamins provide a framework for the nuclear envelope, bridging the nuclear envelope and chromatin, thereby playing an important role in nuclear assembly, chromatin organization, nuclear membrane and telomere dynamics. The structural integrity of the lamina is strictly controlled by the cell cycle, as seen by the disintegration and formation of the nuclear envelope in prophase and telophase, respectively. In Xenopus laevis (African clawed frog), this protein is Lamin-B3 (lmnb3.L).